A 394-amino-acid chain; its full sequence is Probable peptidoglycan glycosyltransferase FtsW (394 aa).

Residues 1 to 27 are Cytoplasmic-facing; that stretch reads MSALRSVAGLLQRWLLPARPAGLYDRQ. Residues 28 to 48 traverse the membrane as a helical segment; sequence LVVLALALMAVGLVIVASASI. Topologically, residues 49-64 are periplasmic; the sequence is PEGIAINNDPFMFVKR. Residues 65 to 85 form a helical membrane-spanning segment; sequence HGLFLVMALGISWFVLQVPMA. The Cytoplasmic portion of the chain corresponds to 86–88; it reads RWQ. The helical transmembrane segment at 89–109 threads the bilayer; the sequence is HYNGPMLVLAILMLVLVLLVG. Residues 110-123 are Periplasmic-facing; the sequence is RSVNGSIRWLPLGP. A helical membrane pass occupies residues 124–144; it reads FNLQPAEFGKLALFVYLAGYL. Residues 145 to 154 lie on the Cytoplasmic side of the membrane; sequence VRRQSEVRER. Residues 155-175 form a helical membrane-spanning segment; it reads FIGFMKPMAVLFVVAILLLAQ. Residue Pro-176 is a topological domain, periplasmic. A helical transmembrane segment spans residues 177 to 197; it reads DLGSVVVMFVTSLGMLFLAGA. Position 198 (Arg-198) is a topological domain, cytoplasmic. A helical transmembrane segment spans residues 199-219; it reads LGQFIGLILVGVSAVVTLVIA. Residues 220–279 lie on the Periplasmic side of the membrane; it reads EPYRMRRVTSFLDPWADPFGSGYQLTQSLMAFGRGSWFGEGLGNSIQKMEYLPEAHTDFV. Residues 280 to 300 traverse the membrane as a helical segment; it reads FAILGEELGYAGVLGALFLIF. At 301–322 the chain is on the cytoplasmic side; sequence ALSFKALKLGHQALVAERLYEG. A helical transmembrane segment spans residues 323–343; it reads YLAIGIGIWFSFQTFVNVGAA. The Periplasmic portion of the chain corresponds to 344 to 354; it reads SGMMPTKGLTL. The chain crosses the membrane as a helical span at residues 355–375; that stretch reads PLVSYGGSSLIIMMVAVSMLV. The Cytoplasmic segment spans residues 376–394; it reads RIDFELRQASAQARVREVS.

The protein belongs to the SEDS family. FtsW subfamily.

It is found in the cell inner membrane. It catalyses the reaction [GlcNAc-(1-&gt;4)-Mur2Ac(oyl-L-Ala-gamma-D-Glu-L-Lys-D-Ala-D-Ala)](n)-di-trans,octa-cis-undecaprenyl diphosphate + beta-D-GlcNAc-(1-&gt;4)-Mur2Ac(oyl-L-Ala-gamma-D-Glu-L-Lys-D-Ala-D-Ala)-di-trans,octa-cis-undecaprenyl diphosphate = [GlcNAc-(1-&gt;4)-Mur2Ac(oyl-L-Ala-gamma-D-Glu-L-Lys-D-Ala-D-Ala)](n+1)-di-trans,octa-cis-undecaprenyl diphosphate + di-trans,octa-cis-undecaprenyl diphosphate + H(+). It participates in cell wall biogenesis; peptidoglycan biosynthesis. Peptidoglycan polymerase that is essential for cell division. In Aeromonas salmonicida (strain A449), this protein is Probable peptidoglycan glycosyltransferase FtsW.